Here is a 671-residue protein sequence, read N- to C-terminus: DNA ligase (671 aa).

Residues 32-36 (DAEYD), 81-82 (SL), and glutamate 113 contribute to the NAD(+) site. Lysine 115 serves as the catalytic N6-AMP-lysine intermediate. NAD(+) contacts are provided by arginine 136, glutamate 173, lysine 290, and lysine 314. 4 residues coordinate Zn(2+): cysteine 408, cysteine 411, cysteine 426, and cysteine 432. Residues 593–671 (EIDSPFAGKT…ETEMLRLLGS (79 aa)) form the BRCT domain.

This sequence belongs to the NAD-dependent DNA ligase family. LigA subfamily. It depends on Mg(2+) as a cofactor. The cofactor is Mn(2+).

The enzyme catalyses NAD(+) + (deoxyribonucleotide)n-3'-hydroxyl + 5'-phospho-(deoxyribonucleotide)m = (deoxyribonucleotide)n+m + AMP + beta-nicotinamide D-nucleotide.. Functionally, DNA ligase that catalyzes the formation of phosphodiester linkages between 5'-phosphoryl and 3'-hydroxyl groups in double-stranded DNA using NAD as a coenzyme and as the energy source for the reaction. It is essential for DNA replication and repair of damaged DNA. This is DNA ligase from Escherichia coli O1:K1 / APEC.